The chain runs to 143 residues: Large ribosomal subunit protein uL16c (143 aa).

It belongs to the universal ribosomal protein uL16 family. As to quaternary structure, part of the 50S ribosomal subunit.

The protein localises to the plastid. The protein resides in the chloroplast. The chain is Large ribosomal subunit protein uL16c from Chlorokybus atmophyticus (Soil alga).